The following is a 124-amino-acid chain: Fluoride-specific ion channel FluC (124 aa).

Transmembrane regions (helical) follow at residues 1–21 (MFNL…RHLT), 35–55 (WGTM…IAIL), 66–86 (LFVA…SLDF), and 99–119 (FGYA…GLWL). The Na(+) site is built by Gly-74 and Thr-77.

The protein belongs to the fluoride channel Fluc/FEX (TC 1.A.43) family.

It is found in the cell inner membrane. It catalyses the reaction fluoride(in) = fluoride(out). Its activity is regulated as follows. Na(+) is not transported, but it plays an essential structural role and its presence is essential for fluoride channel function. Fluoride-specific ion channel. Important for reducing fluoride concentration in the cell, thus reducing its toxicity. The chain is Fluoride-specific ion channel FluC from Mesorhizobium japonicum (strain LMG 29417 / CECT 9101 / MAFF 303099) (Mesorhizobium loti (strain MAFF 303099)).